The sequence spans 291 residues: Protease HtpX homolog (291 aa).

Helical transmembrane passes span 4-24 (VVLF…SARV) and 38-58 (MGML…ISLL). Position 144 (His144) interacts with Zn(2+). The active site involves Glu145. Residue His148 coordinates Zn(2+). The next 2 helical transmembrane spans lie at 159-179 (LIQG…AYAI) and 199-219 (ISSI…VMYF). Residue Glu224 participates in Zn(2+) binding.

The protein belongs to the peptidase M48B family. Zn(2+) serves as cofactor.

It is found in the cell inner membrane. This Chlorobium phaeobacteroides (strain DSM 266 / SMG 266 / 2430) protein is Protease HtpX homolog.